The sequence spans 230 residues: UPF0173 metal-dependent hydrolase MM_2300 (230 aa).

The protein belongs to the UPF0173 family.

This is UPF0173 metal-dependent hydrolase MM_2300 from Methanosarcina mazei (strain ATCC BAA-159 / DSM 3647 / Goe1 / Go1 / JCM 11833 / OCM 88) (Methanosarcina frisia).